Reading from the N-terminus, the 177-residue chain is Secretion monitor (177 aa).

An N-terminal signal peptide occupies residues 1 to 37 (MIGILNRWRQFGRRYFWPHLLLGMVAASLGVPSNLSG).

Belongs to the SecM family.

It is found in the cytoplasm. Its subcellular location is the cytosol. It localises to the periplasm. Regulates secA expression by translational coupling of the secM secA operon. Translational pausing at a specific Pro residue 5 residues before the end of the protein may allow disruption of a mRNA repressor helix that normally suppresses secA translation initiation. This Yersinia pseudotuberculosis serotype O:1b (strain IP 31758) protein is Secretion monitor.